The sequence spans 295 residues: Probable aspartoacylase (295 aa).

Zn(2+) is bound by residues histidine 16 and glutamate 19. Residues arginine 58 and 65–66 (NR) contribute to the substrate site. Zn(2+) is bound at residue histidine 107. Substrate contacts are provided by glutamate 166 and tyrosine 277.

This sequence belongs to the AspA/AstE family. Aspartoacylase subfamily. Requires Zn(2+) as cofactor.

It carries out the reaction an N-acyl-L-aspartate + H2O = a carboxylate + L-aspartate. This is Probable aspartoacylase from Acaryochloris marina (strain MBIC 11017).